Reading from the N-terminus, the 216-residue chain is Thiopurine S-methyltransferase (216 aa).

Residues W10, L45, E66, and R123 each coordinate S-adenosyl-L-methionine.

Belongs to the class I-like SAM-binding methyltransferase superfamily. TPMT family.

The protein resides in the cytoplasm. The catalysed reaction is S-adenosyl-L-methionine + a thiopurine = S-adenosyl-L-homocysteine + a thiopurine S-methylether.. This is Thiopurine S-methyltransferase from Pseudomonas putida (strain ATCC 47054 / DSM 6125 / CFBP 8728 / NCIMB 11950 / KT2440).